Here is a 374-residue protein sequence, read N- to C-terminus: Copper-containing nitrite reductase (374 aa).

The segment at residues 1–31 is a signal peptide (tat-type signal); the sequence is MFTRRAALVGAAALASAPLVIRTAGAEEAPA. 2 consecutive Plastocyanin-like domains span residues 93–189 and 254–355; these read MTFD…IMVL and GAVG…VLVE. The Cu cation site is built by His126, His131, His166, Cys167, His177, Met182, and His338.

Belongs to the multicopper oxidase family. Homotrimer. The cofactor is Cu(2+). It depends on Cu(+) as a cofactor. FAD serves as cofactor. In terms of processing, predicted to be exported by the Tat system. The position of the signal peptide cleavage has not been experimentally proven.

It is found in the periplasm. It carries out the reaction nitric oxide + Fe(III)-[cytochrome c] + H2O = Fe(II)-[cytochrome c] + nitrite + 2 H(+). Its pathway is nitrogen metabolism; nitrate reduction (denitrification); dinitrogen from nitrate: step 2/4. In Cereibacter sphaeroides (strain ATCC 17025 / ATH 2.4.3) (Rhodobacter sphaeroides), this protein is Copper-containing nitrite reductase (nirK).